Here is a 1067-residue protein sequence, read N- to C-terminus: MPLNKDIKKVLVIGSGPIIIGQAAEFDYSGTQACQALKEEGIEVVLVNSNPATIMTDKEIADKVYLEPLTVEFVEKVIEKERPDSLLAGMGGQTGLNLAVELYEKGILDKYNVKVIGTSIESIKEGEDRELFRDMMNRINQPVIQSEIITDLDSGIAFARKIGYPVIVRPAYTLGGTGGGIANNEEELIETLTSGLQLSTIGQVLLEKSVKGWKEIEYEVMRDSFGNCITVCNMENIDPVGIHTGDSIVVAPSQTLSDKEYQMLRSASIDIINAVGIKGGCNVQFALNPHSFEYAVIEINPRVSRSSALASKATGYPIAKVAAKIALGYGLDEIKNAVTGMTYACFEPSLDYVVVKIPKWPFDKFQGADRVLGTKMMATGEIMAIGSNFEAAFLKGIRSLEIGKYSLEHKKFKDLSMYELRERVVSPDDERIFALAEMLRRGYRIDMVSKITGIDIFFLEKFRWLVEEEQKLKQSTIDDLNREWLLKLKRRGFSDKAIADMLKVSPDEIYRLRDIWHIKPSYKMVDTCGGEFEALSPYYYSTYEQYDEVVVSDNKKVVVIGSGPIRIGQGIEFDYASVHCVMALRKQGIETIVINNNPETVSTDFSISDKLYFEPLTEEDVLNIIDKENPDGVILQFGGQTAIKLAKFLKEKNIPTLGTTSDQIDLAEDREQFDDLLERLNIARPKGKGVWSLEEGLEEARRLGFPILVRPSFVLGGQGMEITHDEEELTYYLTNAFEKDSKNPILIDKYLMGREIEVDAISDGEDVLVPGIMEHLERAGVHSGDSITMYPAQNISDKIKEDVLDYTKKLALSIGIKGMINIQFIEFEGKLYVIEVNPRASRTVPYISKVSGVPIVDIATRIMLGEKLKDLGYGTGVYKEPELVSVKVPVFSTQKLPNVEVSLGPEMRSTGEVLGVGRNVFEALYKGFVGASMYTGDKGKTILATIKKHDKKEFMELSKDLDKLGYNFIATTGTANELREAGIDAKEVRRIGEESPNIMDLIKNKEIDLVVNTPTKANDSKRDGFHIRRAAIERNIGVMTSLDTLKALVELQKEGAHNRELEVFNLI.

Positions M1–E401 are carboxyphosphate synthetic domain. R129, R169, G175, G176, K208, V210, E215, G241, I242, H243, Q284, and E298 together coordinate ATP. The 195-residue stretch at R133–L327 folds into the ATP-grasp 1 domain. 3 residues coordinate Mg(2+): Q284, E298, and N300. Mn(2+) contacts are provided by Q284, E298, and N300. An oligomerization domain region spans residues I402–V549. Positions V550–S932 are carbamoyl phosphate synthetic domain. Residues D674–L864 enclose the ATP-grasp 2 domain. 10 residues coordinate ATP: R710, K749, L751, E755, G780, V781, H782, S783, Q823, and E835. Mg(2+) is bound by residues Q823, E835, and N837. Mn(2+) is bound by residues Q823, E835, and N837. Residues M933–I1067 enclose the MGS-like domain. The allosteric domain stretch occupies residues M933 to I1067.

Belongs to the CarB family. As to quaternary structure, composed of two chains; the small (or glutamine) chain promotes the hydrolysis of glutamine to ammonia, which is used by the large (or ammonia) chain to synthesize carbamoyl phosphate. Tetramer of heterodimers (alpha,beta)4. The cofactor is Mg(2+). Requires Mn(2+) as cofactor.

The catalysed reaction is hydrogencarbonate + L-glutamine + 2 ATP + H2O = carbamoyl phosphate + L-glutamate + 2 ADP + phosphate + 2 H(+). It carries out the reaction hydrogencarbonate + NH4(+) + 2 ATP = carbamoyl phosphate + 2 ADP + phosphate + 2 H(+). Its pathway is amino-acid biosynthesis; L-arginine biosynthesis; carbamoyl phosphate from bicarbonate: step 1/1. The protein operates within pyrimidine metabolism; UMP biosynthesis via de novo pathway; (S)-dihydroorotate from bicarbonate: step 1/3. Its function is as follows. Large subunit of the glutamine-dependent carbamoyl phosphate synthetase (CPSase). CPSase catalyzes the formation of carbamoyl phosphate from the ammonia moiety of glutamine, carbonate, and phosphate donated by ATP, constituting the first step of 2 biosynthetic pathways, one leading to arginine and/or urea and the other to pyrimidine nucleotides. The large subunit (synthetase) binds the substrates ammonia (free or transferred from glutamine from the small subunit), hydrogencarbonate and ATP and carries out an ATP-coupled ligase reaction, activating hydrogencarbonate by forming carboxy phosphate which reacts with ammonia to form carbamoyl phosphate. In Clostridium perfringens (strain SM101 / Type A), this protein is Carbamoyl phosphate synthase large chain.